The chain runs to 404 residues: 1-deoxy-D-xylulose 5-phosphate reductoisomerase (404 aa).

NADPH contacts are provided by Thr-10, Gly-11, Ser-12, Ile-13, Gly-36, Arg-37, Asn-38, and Asn-124. Residue Lys-125 participates in 1-deoxy-D-xylulose 5-phosphate binding. Residue Glu-126 coordinates NADPH. Asp-150 contacts Mn(2+). The 1-deoxy-D-xylulose 5-phosphate site is built by Ser-151, Glu-152, Ser-186, and His-209. Residue Glu-152 coordinates Mn(2+). Position 215 (Gly-215) interacts with NADPH. Residues Ser-222, Asn-227, Lys-228, and Glu-231 each coordinate 1-deoxy-D-xylulose 5-phosphate. Glu-231 contributes to the Mn(2+) binding site.

This sequence belongs to the DXR family. In terms of assembly, homodimer. Mg(2+) serves as cofactor. Requires Mn(2+) as cofactor.

The catalysed reaction is 2-C-methyl-D-erythritol 4-phosphate + NADP(+) = 1-deoxy-D-xylulose 5-phosphate + NADPH + H(+). The protein operates within isoprenoid biosynthesis; isopentenyl diphosphate biosynthesis via DXP pathway; isopentenyl diphosphate from 1-deoxy-D-xylulose 5-phosphate: step 1/6. Catalyzes the NADPH-dependent rearrangement and reduction of 1-deoxy-D-xylulose-5-phosphate (DXP) to 2-C-methyl-D-erythritol 4-phosphate (MEP). This Erwinia tasmaniensis (strain DSM 17950 / CFBP 7177 / CIP 109463 / NCPPB 4357 / Et1/99) protein is 1-deoxy-D-xylulose 5-phosphate reductoisomerase.